Consider the following 287-residue polypeptide: Cyclopropane mycolic acid synthase MmaA2 (287 aa).

S-adenosyl-L-methionine contacts are provided by residues 33 to 34, 72 to 74, 94 to 99, 123 to 124, and Ile-136; these read YS, GCG, TLSKNQ, and WE. Residue Cys-269 is part of the active site.

The protein belongs to the CFA/CMAS family.

The catalysed reaction is a 1-acyl-2-(9Z)-enoyl-sn-glycero-3-phospholipid + S-adenosyl-L-methionine = a 1-acyl-2-(9-cyclopronane)-acyl-sn-glycero-3-phospholipid + S-adenosyl-L-homocysteine + H(+). It functions in the pathway lipid metabolism; mycolic acid biosynthesis. Its function is as follows. Catalyzes the conversion of a double bond to a cis cyclopropane ring at the distal position of an alpha mycolic acid via the transfer of a methylene group from S-adenosyl-L-methionine. MmaA2 also catalyzes the biosynthesis of the cis-cyclopropanated methoxymycolates. Cyclopropanated mycolic acids are key factors participating in cell envelope permeability, host immunomodulation and persistence. This chain is Cyclopropane mycolic acid synthase MmaA2 (cmaC), found in Mycobacterium bovis (strain ATCC BAA-935 / AF2122/97).